The following is a 360-amino-acid chain: Phosphoserine aminotransferase (360 aa).

R41 lines the L-glutamate pocket. W101, T152, D172, and Q195 together coordinate pyridoxal 5'-phosphate. An N6-(pyridoxal phosphate)lysine modification is found at K196. A pyridoxal 5'-phosphate-binding site is contributed by 237–238 (NT).

This sequence belongs to the class-V pyridoxal-phosphate-dependent aminotransferase family. SerC subfamily. Homodimer. Requires pyridoxal 5'-phosphate as cofactor.

The protein localises to the cytoplasm. It carries out the reaction O-phospho-L-serine + 2-oxoglutarate = 3-phosphooxypyruvate + L-glutamate. The catalysed reaction is 4-(phosphooxy)-L-threonine + 2-oxoglutarate = (R)-3-hydroxy-2-oxo-4-phosphooxybutanoate + L-glutamate. The protein operates within amino-acid biosynthesis; L-serine biosynthesis; L-serine from 3-phospho-D-glycerate: step 2/3. It participates in cofactor biosynthesis; pyridoxine 5'-phosphate biosynthesis; pyridoxine 5'-phosphate from D-erythrose 4-phosphate: step 3/5. In terms of biological role, catalyzes the reversible conversion of 3-phosphohydroxypyruvate to phosphoserine and of 3-hydroxy-2-oxo-4-phosphonooxybutanoate to phosphohydroxythreonine. The chain is Phosphoserine aminotransferase from Burkholderia ambifaria (strain MC40-6).